Here is a 347-residue protein sequence, read N- to C-terminus: Phenylalanine--tRNA ligase alpha subunit (347 aa).

Mg(2+) is bound at residue E262.

The protein belongs to the class-II aminoacyl-tRNA synthetase family. Phe-tRNA synthetase alpha subunit type 1 subfamily. Tetramer of two alpha and two beta subunits. Mg(2+) serves as cofactor.

The protein localises to the cytoplasm. It carries out the reaction tRNA(Phe) + L-phenylalanine + ATP = L-phenylalanyl-tRNA(Phe) + AMP + diphosphate + H(+). This is Phenylalanine--tRNA ligase alpha subunit from Roseiflexus castenholzii (strain DSM 13941 / HLO8).